The primary structure comprises 301 residues: Methionyl-tRNA formyltransferase (301 aa).

110–113 is a (6S)-5,6,7,8-tetrahydrofolate binding site; the sequence is SLLP.

Belongs to the Fmt family.

The enzyme catalyses L-methionyl-tRNA(fMet) + (6R)-10-formyltetrahydrofolate = N-formyl-L-methionyl-tRNA(fMet) + (6S)-5,6,7,8-tetrahydrofolate + H(+). Functionally, attaches a formyl group to the free amino group of methionyl-tRNA(fMet). The formyl group appears to play a dual role in the initiator identity of N-formylmethionyl-tRNA by promoting its recognition by IF2 and preventing the misappropriation of this tRNA by the elongation apparatus. The sequence is that of Methionyl-tRNA formyltransferase from Acidiphilium cryptum (strain JF-5).